Consider the following 122-residue polypeptide: Large ribosomal subunit protein uL14c (122 aa).

It belongs to the universal ribosomal protein uL14 family. In terms of assembly, part of the 50S ribosomal subunit.

Its subcellular location is the plastid. It is found in the chloroplast. In terms of biological role, binds to 23S rRNA. This chain is Large ribosomal subunit protein uL14c, found in Phalaenopsis aphrodite subsp. formosana (Moth orchid).